The following is a 741-amino-acid chain: uncharacterized protein (741 aa).

The segment covering 1–17 (MDSNTNENNSHASSNER) has biased composition (polar residues). Positions 1–50 (MDSNTNENNSHASSNERQSSEGHDDYLNRNPNSEATEGEEGTHPTTGTQP) are disordered. Over residues 18-27 (QSSEGHDDYL) the composition is skewed to basic and acidic residues. Residues 107–150 (CPICYDDMNENDEKQATKMPCGHIFGKNCLQKWLENHCTCPLCR) form an RING-type 1; degenerate zinc finger. Composition is skewed to polar residues over residues 177–193 (GNQG…SNGV), 252–263 (PDSNTSTPTTRS), and 277–302 (NASS…NAFF). 6 disordered regions span residues 177–214 (GNQG…RTGV), 238–387 (SATN…NTNR), 500–543 (QPAV…PGIT), 561–619 (ENRM…TPTH), 638–688 (STPS…PQCQ), and 713–741 (RCQQ…EEHK). The span at 316-332 (TSNLTSNSGSMTNSTST) shows a compositional bias: low complexity. Composition is skewed to polar residues over residues 333-344 (DLPTSNLPSQNA) and 357-386 (PPNL…ANTN). Composition is skewed to polar residues over residues 563-586 (RMNQ…SINV), 604-619 (ENSS…TPTH), and 652-661 (SKVSSGTSTP). Residues 687-736 (CQLEDQGICDPNDRFVHFECGHSVHERCQQSTSNSENQMDEEIGECPKCR) form an RING-type 2; degenerate zinc finger. Positions 731–741 (ECPKCRNEEHK) are enriched in basic and acidic residues.

The protein localises to the nucleus. This is an uncharacterized protein from Schizosaccharomyces pombe (strain 972 / ATCC 24843) (Fission yeast).